The primary structure comprises 211 residues: uncharacterized protein (211 aa).

6 helical membrane passes run 21–38, 53–75, 82–104, 124–146, 159–178, and 188–210; these read WYVI…ASEI, WGMD…YAAV, TAYL…MGVA, IFYA…AANV, PLLI…YWVY, and AVSF…LMEW.

It is found in the cell membrane. This is an uncharacterized protein from Archaeoglobus fulgidus (strain ATCC 49558 / DSM 4304 / JCM 9628 / NBRC 100126 / VC-16).